Here is a 495-residue protein sequence, read N- to C-terminus: Carotenoid 3,4-desaturase (495 aa).

The protein belongs to the carotenoid/retinoid oxidoreductase family.

The catalysed reaction is dihydroisopentenyldehydrorhodopin + A = isopentenyldehydrorhodopin + AH2. It carries out the reaction dihydrobisanhydrobacterioruberin + A = bisanhydrobacterioruberin + AH2. Its pathway is carotenoid biosynthesis. Involved in the biosynthesis of the acyclic C50 carotenoid bacterioruberin (BR). CrtD is involved in the desaturation reactions that form double bonds at C-3,4 of dihydroisopentenyldehydrorhodopin (DH-IDR) and C-3',4' of dihydrobisanhydrobacterioruberin (DH-BABR) to yield isopentenyld ehydrorhodopin (IDR) and bisanhydrobacterioruberin (BABR), respectively. The polypeptide is Carotenoid 3,4-desaturase (Haloarcula japonica (strain ATCC 49778 / DSM 6131 / JCM 7785 / NBRC 101032 / NCIMB 13157 / TR-1)).